Reading from the N-terminus, the 355-residue chain is Alanine racemase (355 aa).

K34 functions as the Proton acceptor; specific for D-alanine in the catalytic mechanism. The residue at position 34 (K34) is an N6-(pyridoxal phosphate)lysine. A substrate-binding site is contributed by R133. Y249 serves as the catalytic Proton acceptor; specific for L-alanine. A substrate-binding site is contributed by M297.

Belongs to the alanine racemase family. The cofactor is pyridoxal 5'-phosphate.

The enzyme catalyses L-alanine = D-alanine. Its pathway is amino-acid biosynthesis; D-alanine biosynthesis; D-alanine from L-alanine: step 1/1. Functionally, catalyzes the interconversion of L-alanine and D-alanine. May also act on other amino acids. The protein is Alanine racemase (alr) of Rickettsia rickettsii (strain Sheila Smith).